We begin with the raw amino-acid sequence, 233 residues long: Large ribosomal subunit protein uL2 (233 aa).

The tract at residues 195–233 (PHGGGNHQHVGRPSTVGRNAPPGRKVGRLSPKRRRVNGR) is disordered. Residues 219–233 (KVGRLSPKRRRVNGR) show a composition bias toward basic residues.

This sequence belongs to the universal ribosomal protein uL2 family. Part of the 50S ribosomal subunit. Forms a bridge to the 30S subunit in the 70S ribosome.

Its function is as follows. One of the primary rRNA binding proteins. Required for association of the 30S and 50S subunits to form the 70S ribosome, for tRNA binding and peptide bond formation. It has been suggested to have peptidyltransferase activity; this is somewhat controversial. Makes several contacts with the 16S rRNA in the 70S ribosome. The sequence is that of Large ribosomal subunit protein uL2 from Thermoplasma acidophilum (strain ATCC 25905 / DSM 1728 / JCM 9062 / NBRC 15155 / AMRC-C165).